A 421-amino-acid chain; its full sequence is Structure-specific endonuclease subunit SLX1 (421 aa).

Positions 13–95 (AFYCCYLLRS…QHTKESRHAE (83 aa)) constitute a GIY-YIG domain. Disordered regions lie at residues 34 to 57 (TPEPSRRLAQHNGDRTGGARKTSS) and 96 to 120 (VERCESEQLGTRGSSRTGKEVKRAG). An SLX1-type zinc finger spans residues 225–280 (CGVCKQRLNPRNDMIAICSHSLCRCASHLLCLSAHFLEAAGFIGKLIPKEGTCPAC). Positions 310–322 (RRRTEQVGKRKIS) are enriched in basic residues. Residues 310–339 (RRRTEQVGKRKISNHVSSEKGESEASMPST) form a disordered region.

It belongs to the SLX1 family. Forms a heterodimer with SLX4. The cofactor is a divalent metal cation.

The protein resides in the nucleus. Catalytic subunit of the SLX1-SLX4 structure-specific endonuclease that resolves DNA secondary structures generated during DNA repair and recombination. Has endonuclease activity towards branched DNA substrates, introducing single-strand cuts in duplex DNA close to junctions with ss-DNA. The sequence is that of Structure-specific endonuclease subunit SLX1 from Ajellomyces capsulatus (strain G186AR / H82 / ATCC MYA-2454 / RMSCC 2432) (Darling's disease fungus).